A 784-amino-acid chain; its full sequence is Toll-like receptor 2 (784 aa).

The first 20 residues, 1 to 20 (MPHTLWMVWVLGVIISLSKE), serve as a signal peptide directing secretion. The Extracellular segment spans residues 21–587 (ESSNQASLSC…VRLSVSECHR (567 aa)). Cysteines 30 and 36 form a disulfide. 19 LRR repeats span residues 54-77 (VKCL…RYVN), 78-101 (LQAL…SLGR), 102-125 (LEHL…PLSS), 126-150 (LKFL…HLTK), 151-175 (LRIL…GLTF), 176-199 (LEEL…SIQN), 200-223 (VSHL…LTSS), 224-250 (VECL…TNSL), 251-278 (IKKF…QISG), 279-308 (LLEL…DPGK), 309-337 (VETL…LTER), 338-361 (VKRI…HLKS), 362-388 (LEYL…AWPS), 389-414 (LQTL…TLKN), 415-437 (LTNL…WPEK), 438-457 (MKYL…CIPK), 458-478 (TLEI…NLPQ), 479-500 (LKEL…LLPM), and 501-524 (LLVL…SFHT). Asn114 is a glycosylation site (N-linked (GlcNAc...) asparagine). An N-linked (GlcNAc...) asparagine glycan is attached at Asn199. The cysteines at positions 353 and 382 are disulfide-linked. Asn414 carries N-linked (GlcNAc...) asparagine glycosylation. Cys432 and Cys454 form a disulfide bridge. The N-linked (GlcNAc...) asparagine glycan is linked to Asn442. The 55-residue stretch at 525–579 (LKTLEAGGNNFICSCEFLSFTQEQQALAKVLVDWPANYLCDSPSHVRGQRVQDVR) folds into the LRRCT domain. A helical transmembrane segment spans residues 588-608 (AALVSGMCCALFLLILLMGVL). Over 609 to 784 (CHRFHGLWYM…WVNLRAAIKS (176 aa)) the chain is Cytoplasmic. Positions 639–782 (ICYDAFVSYS…GFWVNLRAAI (144 aa)) constitute a TIR domain. Residue Lys754 forms a Glycyl lysine isopeptide (Lys-Gly) (interchain with G-Cter in ubiquitin) linkage. The short motif at 761–778 (YLEWPMDEARQEGFWVNL) is the ATG16L1-binding motif element.

It belongs to the Toll-like receptor family. In terms of assembly, interacts with LY96, TLR1 and TLR6 (via extracellular domain). TLR2 seems to exist in heterodimers with either TLR1 or TLR6 before stimulation by the ligand. The heterodimers form bigger oligomers in response to their corresponding ligands as well as further heterotypic associations with other receptors such as CD14 and/or CD36. Binds MYD88 (via TIR domain). Interacts with TICAM1. Interacts with CNPY3. Interacts with ATG16L1. Interacts with PPP1R11. Interacts with TICAM2. Interacts with TIRAP. In terms of processing, ubiquitinated at Lys-754 by PPP1R11, leading to its degradation. Deubiquitinated by USP2. Post-translationally, glycosylation of Asn-442 is critical for secretion of the N-terminal ectodomain of TLR2.

It localises to the membrane. Its subcellular location is the cytoplasmic vesicle. The protein resides in the phagosome membrane. The protein localises to the membrane raft. Functionally, cooperates with LY96 to mediate the innate immune response to bacterial lipoproteins and other microbial cell wall components. Cooperates with TLR1 or TLR6 to mediate the innate immune response to bacterial lipoproteins or lipopeptides. Acts via MYD88 and TRAF6, leading to NF-kappa-B activation, cytokine secretion and the inflammatory response. May also promote apoptosis in response to lipoproteins. Forms activation clusters composed of several receptors depending on the ligand, these clusters trigger signaling from the cell surface and subsequently are targeted to the Golgi in a lipid-raft dependent pathway. Forms the cluster TLR2:TLR6:CD14:CD36 in response to diacylated lipopeptides and TLR2:TLR1:CD14 in response to triacylated lipopeptides. The chain is Toll-like receptor 2 (TLR2) from Macaca mulatta (Rhesus macaque).